The following is a 293-amino-acid chain: 4-hydroxy-tetrahydrodipicolinate synthase (293 aa).

Residue Thr-47 participates in pyruvate binding. Tyr-136 acts as the Proton donor/acceptor in catalysis. Catalysis depends on Lys-164, which acts as the Schiff-base intermediate with substrate. Ile-206 contributes to the pyruvate binding site.

Belongs to the DapA family. As to quaternary structure, homotetramer; dimer of dimers.

The protein resides in the cytoplasm. It catalyses the reaction L-aspartate 4-semialdehyde + pyruvate = (2S,4S)-4-hydroxy-2,3,4,5-tetrahydrodipicolinate + H2O + H(+). Its pathway is amino-acid biosynthesis; L-lysine biosynthesis via DAP pathway; (S)-tetrahydrodipicolinate from L-aspartate: step 3/4. Catalyzes the condensation of (S)-aspartate-beta-semialdehyde [(S)-ASA] and pyruvate to 4-hydroxy-tetrahydrodipicolinate (HTPA). The chain is 4-hydroxy-tetrahydrodipicolinate synthase from Listeria monocytogenes serotype 4b (strain CLIP80459).